We begin with the raw amino-acid sequence, 123 residues long: uncharacterized protein (123 aa).

This is an uncharacterized protein from Saccharomyces cerevisiae (strain ATCC 204508 / S288c) (Baker's yeast).